We begin with the raw amino-acid sequence, 503 residues long: ATP synthase subunit beta (503 aa).

Residue 157–164 participates in ATP binding; that stretch reads GGAGVGKT.

The protein belongs to the ATPase alpha/beta chains family. F-type ATPases have 2 components, CF(1) - the catalytic core - and CF(0) - the membrane proton channel. CF(1) has five subunits: alpha(3), beta(3), gamma(1), delta(1), epsilon(1). CF(0) has three main subunits: a(1), b(2) and c(9-12). The alpha and beta chains form an alternating ring which encloses part of the gamma chain. CF(1) is attached to CF(0) by a central stalk formed by the gamma and epsilon chains, while a peripheral stalk is formed by the delta and b chains.

It localises to the cell membrane. The enzyme catalyses ATP + H2O + 4 H(+)(in) = ADP + phosphate + 5 H(+)(out). In terms of biological role, produces ATP from ADP in the presence of a proton gradient across the membrane. The catalytic sites are hosted primarily by the beta subunits. The sequence is that of ATP synthase subunit beta from Christiangramia forsetii (strain DSM 17595 / CGMCC 1.15422 / KT0803) (Gramella forsetii).